The primary structure comprises 112 residues: Ribosome-binding factor A (112 aa).

The protein belongs to the RbfA family. Monomer. Binds 30S ribosomal subunits, but not 50S ribosomal subunits or 70S ribosomes.

The protein resides in the cytoplasm. Functionally, one of several proteins that assist in the late maturation steps of the functional core of the 30S ribosomal subunit. Associates with free 30S ribosomal subunits (but not with 30S subunits that are part of 70S ribosomes or polysomes). Required for efficient processing of 16S rRNA. May interact with the 5'-terminal helix region of 16S rRNA. The chain is Ribosome-binding factor A from Mycoplasmopsis pulmonis (strain UAB CTIP) (Mycoplasma pulmonis).